Reading from the N-terminus, the 232-residue chain is Sugar fermentation stimulation protein homolog (232 aa).

This sequence belongs to the SfsA family.

This chain is Sugar fermentation stimulation protein homolog, found in Brucella anthropi (strain ATCC 49188 / DSM 6882 / CCUG 24695 / JCM 21032 / LMG 3331 / NBRC 15819 / NCTC 12168 / Alc 37) (Ochrobactrum anthropi).